A 312-amino-acid chain; its full sequence is UPF0725 protein At3g19520 (312 aa).

Belongs to the UPF0725 (EMB2204) family.

In Arabidopsis thaliana (Mouse-ear cress), this protein is UPF0725 protein At3g19520.